A 429-amino-acid polypeptide reads, in one-letter code: Formate-dependent phosphoribosylglycinamide formyltransferase (429 aa).

N(1)-(5-phospho-beta-D-ribosyl)glycinamide contacts are provided by residues 26 to 27 (EL) and Glu86. ATP-binding positions include Arg118, Lys159, 199–202 (EEHI), and Glu207. The ATP-grasp domain maps to 123-319 (ETLVKEAKVP…EFGLHLRAVL (197 aa)). Mg(2+)-binding residues include Glu276 and Glu288. Residues Asp295, Lys375, and 382–383 (RR) each bind N(1)-(5-phospho-beta-D-ribosyl)glycinamide.

This sequence belongs to the PurK/PurT family. In terms of assembly, homodimer.

The catalysed reaction is N(1)-(5-phospho-beta-D-ribosyl)glycinamide + formate + ATP = N(2)-formyl-N(1)-(5-phospho-beta-D-ribosyl)glycinamide + ADP + phosphate + H(+). The protein operates within purine metabolism; IMP biosynthesis via de novo pathway; N(2)-formyl-N(1)-(5-phospho-D-ribosyl)glycinamide from N(1)-(5-phospho-D-ribosyl)glycinamide (formate route): step 1/1. Involved in the de novo purine biosynthesis. Catalyzes the transfer of formate to 5-phospho-ribosyl-glycinamide (GAR), producing 5-phospho-ribosyl-N-formylglycinamide (FGAR). Formate is provided by PurU via hydrolysis of 10-formyl-tetrahydrofolate. This chain is Formate-dependent phosphoribosylglycinamide formyltransferase, found in Pyrococcus abyssi (strain GE5 / Orsay).